A 509-amino-acid chain; its full sequence is ATP synthase subunit alpha (509 aa).

169-176 (GDRQTGKT) contacts ATP.

The protein belongs to the ATPase alpha/beta chains family. As to quaternary structure, F-type ATPases have 2 components, CF(1) - the catalytic core - and CF(0) - the membrane proton channel. CF(1) has five subunits: alpha(3), beta(3), gamma(1), delta(1), epsilon(1). CF(0) has three main subunits: a(1), b(2) and c(9-12). The alpha and beta chains form an alternating ring which encloses part of the gamma chain. CF(1) is attached to CF(0) by a central stalk formed by the gamma and epsilon chains, while a peripheral stalk is formed by the delta and b chains.

The protein localises to the cell inner membrane. The catalysed reaction is ATP + H2O + 4 H(+)(in) = ADP + phosphate + 5 H(+)(out). Functionally, produces ATP from ADP in the presence of a proton gradient across the membrane. The alpha chain is a regulatory subunit. This Methylorubrum extorquens (strain CM4 / NCIMB 13688) (Methylobacterium extorquens) protein is ATP synthase subunit alpha.